The sequence spans 427 residues: Light-independent protochlorophyllide reductase subunit N (427 aa).

Positions 28, 53, and 114 each coordinate [4Fe-4S] cluster.

This sequence belongs to the BchN/ChlN family. In terms of assembly, protochlorophyllide reductase is composed of three subunits; BchL, BchN and BchB. Forms a heterotetramer of two BchB and two BchN subunits. [4Fe-4S] cluster is required as a cofactor.

It catalyses the reaction chlorophyllide a + oxidized 2[4Fe-4S]-[ferredoxin] + 2 ADP + 2 phosphate = protochlorophyllide a + reduced 2[4Fe-4S]-[ferredoxin] + 2 ATP + 2 H2O. It participates in porphyrin-containing compound metabolism; bacteriochlorophyll biosynthesis (light-independent). Functionally, component of the dark-operative protochlorophyllide reductase (DPOR) that uses Mg-ATP and reduced ferredoxin to reduce ring D of protochlorophyllide (Pchlide) to form chlorophyllide a (Chlide). This reaction is light-independent. The NB-protein (BchN-BchB) is the catalytic component of the complex. The polypeptide is Light-independent protochlorophyllide reductase subunit N (Dinoroseobacter shibae (strain DSM 16493 / NCIMB 14021 / DFL 12)).